The sequence spans 350 residues: HTH-type DNA-binding transcriptional activator EutR (350 aa).

Residues 243–344 (SRAREYVLEN…AEKPSLTLHQ (102 aa)) form the HTH araC/xylS-type domain. 2 DNA-binding regions (H-T-H motif) span residues 260–281 (LDLCNQLHVSRRTLQNAFHAIL) and 311–334 (VKDAAMQWGFWHLGQFATDYQQLF).

Its pathway is amine and polyamine degradation; ethanolamine degradation. In terms of biological role, activates the transcription of the eut operon, allowing utilization of ethanolamine (EA). Positively regulates its own transcription. Probably binds EA and vitamin B12 as effectors. Competes with ethanolamine ammonia-lysase (EAL, the first enzyme in the EA degradation pathway) for adenosylcobalamin. Ethanolamine-associated signaling mediated via this protein, but not EA degradation, impacts S.typhimurium survival within macrophages. Binds the promoter of ssrB and eutS in vitro; in mouse infection models binding to ssrB probably induces all 4 operons of pathogenicity island SPI-2. Functionally, expression of the eut operon allows this bacteria to use ethanolamine (EA) as a carbon, nitrogen and energy source. It relies on cobalamin (vitamin B12) both as a cofactor for the ethanolamine ammonia-lyase (EAL) activity and to induce the operon. EA enhances bacterial survival in macrophages in a concentration-dependent manner, suggesting it is an important nutrient in infection. This Salmonella typhimurium (strain LT2 / SGSC1412 / ATCC 700720) protein is HTH-type DNA-binding transcriptional activator EutR.